Consider the following 176-residue polypeptide: MTTIVSVRRHGKVVMAGDGQVSLGNTVMKGNAKKVRRLYHGEVIAGFAGATADAFTLFERFEAQLEKHQGHLVRAAVELAKDWRTDRSLSRLEAMLAVANKDASLIITGNGDVVEPEDGLIAMGSGGAFAQAAARALLLKTDLSAREIAETSLHIAGDICVFTNHNITIEEQDLVG.

Residue T2 is part of the active site. Residues G157, C160, and T163 each coordinate Na(+).

This sequence belongs to the peptidase T1B family. HslV subfamily. In terms of assembly, a double ring-shaped homohexamer of HslV is capped on each side by a ring-shaped HslU homohexamer. The assembly of the HslU/HslV complex is dependent on binding of ATP.

The protein localises to the cytoplasm. The catalysed reaction is ATP-dependent cleavage of peptide bonds with broad specificity.. Allosterically activated by HslU binding. Its function is as follows. Protease subunit of a proteasome-like degradation complex believed to be a general protein degrading machinery. The polypeptide is ATP-dependent protease subunit HslV (Pseudomonas savastanoi pv. phaseolicola (strain 1448A / Race 6) (Pseudomonas syringae pv. phaseolicola (strain 1448A / Race 6))).